A 474-amino-acid chain; its full sequence is Mitogen-activated protein kinase pmk-3 (474 aa).

The segment covering 1-13 (MASVPSSSSLPVS) has biased composition (low complexity). The disordered stretch occupies residues 1–90 (MASVPSSSSL…EEEEDILSKP (90 aa)). Polar residues predominate over residues 30–48 (KRSNNQSQPPESYEPNTWL). Basic and acidic residues predominate over residues 52–69 (REQEQQKKLAAENIKKQS). The Protein kinase domain maps to 114–419 (YDVEPNSIEY…VEEAIQHPYL (306 aa)). ATP contacts are provided by residues 124 to 132 (LGGGSFGNV) and Lys150. Catalysis depends on Asp252, which acts as the Proton acceptor. Residue Thr285 is modified to Phosphothreonine. The short motif at 285-287 (TQY) is the TXY element. Tyr287 is subject to Phosphotyrosine.

It belongs to the protein kinase superfamily. CMGC Ser/Thr protein kinase family. MAP kinase subfamily. Interacts with mak-2. May interact with vhp-1. May interact with uev-3. It depends on Mg(2+) as a cofactor. Post-translationally, dually phosphorylated on Thr-285 and Tyr-287, which activates the enzyme. As to expression, expressed throughout the intestine.

It is found in the nucleus. It localises to the cytoplasm. The protein localises to the cell projection. The protein resides in the axon. Its subcellular location is the dendrite. It is found in the cilium. It catalyses the reaction L-seryl-[protein] + ATP = O-phospho-L-seryl-[protein] + ADP + H(+). It carries out the reaction L-threonyl-[protein] + ATP = O-phospho-L-threonyl-[protein] + ADP + H(+). Activated by phosphorylation on threonine and tyrosine. Its function is as follows. Responds to activation by environmental stress and pro-inflammatory cytokines by phosphorylating downstream targets. Involved in axon regeneration after injury, probably downstream of dlk-1 and mkk-4 and upstream of mak-2. May phosphorylate mak-2. Plays a role in cilium length regulation, possibly by reducing rab-5 mediated endocytosis. Plays a role in the formation of muscle connections, also called muscle arm extensions, between the body wall and the motor axons in the dorsal and ventral cord. In Caenorhabditis elegans, this protein is Mitogen-activated protein kinase pmk-3 (pmk-3).